Here is a 174-residue protein sequence, read N- to C-terminus: Crossover junction endodeoxyribonuclease RuvC (174 aa).

Residues aspartate 8, glutamate 68, and aspartate 140 contribute to the active site. The Mg(2+) site is built by aspartate 8, glutamate 68, and aspartate 140.

It belongs to the RuvC family. Homodimer which binds Holliday junction (HJ) DNA. The HJ becomes 2-fold symmetrical on binding to RuvC with unstacked arms; it has a different conformation from HJ DNA in complex with RuvA. In the full resolvosome a probable DNA-RuvA(4)-RuvB(12)-RuvC(2) complex forms which resolves the HJ. It depends on Mg(2+) as a cofactor.

Its subcellular location is the cytoplasm. It catalyses the reaction Endonucleolytic cleavage at a junction such as a reciprocal single-stranded crossover between two homologous DNA duplexes (Holliday junction).. The RuvA-RuvB-RuvC complex processes Holliday junction (HJ) DNA during genetic recombination and DNA repair. Endonuclease that resolves HJ intermediates. Cleaves cruciform DNA by making single-stranded nicks across the HJ at symmetrical positions within the homologous arms, yielding a 5'-phosphate and a 3'-hydroxyl group; requires a central core of homology in the junction. The consensus cleavage sequence is 5'-(A/T)TT(C/G)-3'. Cleavage occurs on the 3'-side of the TT dinucleotide at the point of strand exchange. HJ branch migration catalyzed by RuvA-RuvB allows RuvC to scan DNA until it finds its consensus sequence, where it cleaves and resolves the cruciform DNA. The protein is Crossover junction endodeoxyribonuclease RuvC of Legionella pneumophila (strain Paris).